The following is a 144-amino-acid chain: Small ribosomal subunit protein bS6 (144 aa).

The tract at residues 97–144 is disordered; it reads DTEQSLIMKSKDEKGDKPERSERRRRDDEEVDAAPAATDTDGDNAEAA. The segment covering 105–124 has biased composition (basic and acidic residues); that stretch reads KSKDEKGDKPERSERRRRDD.

It belongs to the bacterial ribosomal protein bS6 family.

Binds together with bS18 to 16S ribosomal RNA. The chain is Small ribosomal subunit protein bS6 from Xanthomonas campestris pv. campestris (strain B100).